We begin with the raw amino-acid sequence, 325 residues long: Olfactory receptor 5H6 (325 aa).

Over 1-41 (MFLYLCFIFQRTCSEEMEEENATLLTEFVLTGFLHQPDCKI) the chain is Extracellular. Residue asparagine 21 is glycosylated (N-linked (GlcNAc...) asparagine). Residues 42 to 62 (PLFLAFLVIYLITIMGNLGLI) form a helical membrane-spanning segment. The Cytoplasmic segment spans residues 63–70 (VLIWKDPH). A helical transmembrane segment spans residues 71-91 (LHIPMYLFLGSLAFVDASLSS). At 92–115 (TVTPKMLINFLAKSKMISLSECMV) the chain is on the extracellular side. Residues cysteine 113 and cysteine 205 are joined by a disulfide bond. Residues 116–136 (QFFSLVTTVTTECFLLATMAY) traverse the membrane as a helical segment. Topologically, residues 137–155 (DRYVAICKALLYPVIMTNE) are cytoplasmic. A helical membrane pass occupies residues 156–176 (LCIQLLVLSFIGGLLHALIHE). Topologically, residues 177–212 (AFSFRLTFCNSNIIQHFYCDIIPLLKISCTDSSINF) are extracellular. A helical transmembrane segment spans residues 213 to 233 (LMVFIFAGSVQVFTIGTILIS). Residues 234-253 (YTIILFTILEKKSIKGIRKA) are Cytoplasmic-facing. The chain crosses the membrane as a helical span at residues 254–274 (VSTCGAHLLSVSLYYGPLTFK). Topologically, residues 275–287 (YLGSASPQADDQD) are extracellular. The helical transmembrane segment at 288–308 (MMESLFYTVIVPLLNPMIYSL) threads the bilayer. Residues 309-325 (RNKQVIASFTKMFKSNV) are Cytoplasmic-facing.

Belongs to the G-protein coupled receptor 1 family.

Its subcellular location is the cell membrane. Its function is as follows. Odorant receptor. The protein is Olfactory receptor 5H6 (OR5H6) of Homo sapiens (Human).